A 559-amino-acid chain; its full sequence is NAD-dependent malic enzyme 2 (559 aa).

Tyr98 acts as the Proton donor in catalysis. Residue Arg151 participates in NAD(+) binding. Catalysis depends on Lys169, which acts as the Proton acceptor. A divalent metal cation is bound by residues Glu240, Asp241, and Asp264. NAD(+) is bound by residues Asp264 and Asn413.

The protein belongs to the malic enzymes family. As to quaternary structure, homotetramer. It depends on Mg(2+) as a cofactor. Mn(2+) is required as a cofactor.

The catalysed reaction is (S)-malate + NAD(+) = pyruvate + CO2 + NADH. The enzyme catalyses oxaloacetate + H(+) = pyruvate + CO2. This chain is NAD-dependent malic enzyme 2, found in Vibrio vulnificus (strain YJ016).